We begin with the raw amino-acid sequence, 754 residues long: MATAQSNSPRVFCIGTADTKFDELRFLSEHVRSSLNSFSNKSSFKVGVTVVDVSTSRKETNSCADFDFVPSKDVLSCYARGEGTVGRFPDIRGQAIAIMNKALETFLSKANGEQNLAGVIGLGGSGGTSLLSSAFRSLPIGIPKVIISTVASGQTESYIGTSDLVLFPSVVDICGINNVSKVVLSNAGAAFAGMVIGRLESSKEHSITNGKFTVGVTMFGVTTPCVNAVKERLVKEGYETLVFHATGVGGRAMEDLVRGGFIQGVLDITTTEVADYVVGGVMACDSSRFDAILEKKIPLVLSVGALDMVNFGPKTTIPPEFQQRKIHQHNEQVSLMHTTVGENKKFAAFIAEKLNKASSSVCVCLPEKGVSALDAPGKDFYDPEATSCLTHELQMLLENNERCQVKVYPYHINDVEFANALVDSFLEMSPKSGHVECQTAESKSIQGIQNVNAVLEKYPSCNGKNFSRLNDFPNAKPETLQKRIVILQKLKDQISKGKPIIGAGAGTGISAKFEEAGGVDLIVLYNSGRFRMAGRGSLAGLLPFADANAIVLEMANEVLPVVKEVAVLAGVCATDPFRRMDNFLKQLESVGFCGVQNFPTVGLFDGNFRQNLEETGMGYGLEVEMIATAHRMGLLTTPYAFCPDEAVAMAEAGADIIVAHMGLTTSGSIGAKTAVSLEESVTCVQAIADATHRINPDAIVLCHGGPISSPEEAAYVLKRTTGVHGFYGASSMERLPVEQAITATVQQYKSISME.

An N-terminal inhibitory domain NN region spans residues 1 to 201 (MATAQSNSPR…AGMVIGRLES (201 aa)). Residues 18-20 (DTK), threonine 55, arginine 92, and 124-127 (GSGG) each bind ATP. The interval 211 to 431 (KFTVGVTMFG…VDSFLEMSPK (221 aa)) is N-terminal inhibitory domain NC.

It belongs to the UPF0261 family. Homodimer. As to quaternary structure, (Microbial infection) Binds, via an ATP bridge, to the tobamoviruses avirulent (Avr) replication proteins (large and small subunits, e.g. tobacco mild green mosaic virus (TMGMV) AC P18339 and pepper mild mottle virus (PMMoV) AC P89657) to inhibit their function after the translation of tobamoviruses RNA, but before the viral replication complex formation on the membrane surfaces; this interaction is not possible with resistance-breaking strains replication proteins.

Inhibitor of viral RNA replication which confers resistance to some tobamoviruses including tobacco mild green mosaic virus (TMGMV) and pepper mild mottle virus (PMMoV), but not to tomato mosaic virus (ToMV strains L, ToMV0 and ToMV1-2) and tobacco mosaic virus (TMV). Prevents tobamoviruses RNA replication by affecting the association of tobamoviruses replication proteins (large and small subunits) with host membrane-associated proteins (e.g. TOM1, TOM2A and ARL8), thus inhibiting the replication complex formation on the membranes and avoiding viral negative-strand RNA synthesis. In Solanum lycopersicum (Tomato), this protein is ToMV susceptible protein tm-1(GCR26).